Consider the following 343-residue polypeptide: Leucine-rich repeat-containing protein 39 (343 aa).

LRR repeat units follow at residues 64–87 (EEGR…LVQL), 88–110 (SQIQ…ISSF), 111–133 (QSLI…IGKL), 134–156 (TRLR…LGCC), 158–180 (NLEK…LSNL), 181–203 (KKLS…VVNL), 204–226 (PSLE…IHRM), 228–249 (KLHT…ISRM), 250–274 (KSLD…GMSN), and 275–295 (LRFV…PDLN).

The protein resides in the cytoplasm. The protein localises to the myofibril. It is found in the sarcomere. Its subcellular location is the m line. In terms of biological role, component of the sarcomeric M-band which plays a role in myocyte response to biomechanical stress. May regulate expression of other M-band proteins via an SRF-dependent pathway. Important for normal contractile function in heart. The protein is Leucine-rich repeat-containing protein 39 of Danio rerio (Zebrafish).